A 303-amino-acid chain; its full sequence is Oxygen-dependent coproporphyrinogen-III oxidase (303 aa).

S93 contacts substrate. The a divalent metal cation site is built by H97 and H107. H107 functions as the Proton donor in the catalytic mechanism. Residue 109–111 (NVR) participates in substrate binding. A divalent metal cation is bound by residues H149 and H179. Positions 244–279 (YVEFNLVFDRGTLFGLQSGGRTESILLSMPPMAQWR) are important for dimerization. Position 262–264 (262–264 (GGR)) interacts with substrate.

Belongs to the aerobic coproporphyrinogen-III oxidase family. Homodimer. It depends on a divalent metal cation as a cofactor.

The protein localises to the cytoplasm. It catalyses the reaction coproporphyrinogen III + O2 + 2 H(+) = protoporphyrinogen IX + 2 CO2 + 2 H2O. Its pathway is porphyrin-containing compound metabolism; protoporphyrin-IX biosynthesis; protoporphyrinogen-IX from coproporphyrinogen-III (O2 route): step 1/1. Involved in the heme biosynthesis. Catalyzes the aerobic oxidative decarboxylation of propionate groups of rings A and B of coproporphyrinogen-III to yield the vinyl groups in protoporphyrinogen-IX. The polypeptide is Oxygen-dependent coproporphyrinogen-III oxidase (Bordetella petrii (strain ATCC BAA-461 / DSM 12804 / CCUG 43448)).